The following is a 567-amino-acid chain: Phenylalanine--tRNA ligase beta subunit (567 aa).

Residues 284–359 enclose the B5 domain; sequence FAVRTKHVSH…RAYDFNDLTP (76 aa). Residues aspartate 337, aspartate 343, aspartate 346, and aspartate 347 each contribute to the Mg(2+) site.

The protein belongs to the phenylalanyl-tRNA synthetase beta subunit family. Type 2 subfamily. As to quaternary structure, tetramer of two alpha and two beta subunits. Requires Mg(2+) as cofactor.

It localises to the cytoplasm. It carries out the reaction tRNA(Phe) + L-phenylalanine + ATP = L-phenylalanyl-tRNA(Phe) + AMP + diphosphate + H(+). This chain is Phenylalanine--tRNA ligase beta subunit, found in Halobacterium salinarum (strain ATCC 29341 / DSM 671 / R1).